The following is a 75-amino-acid chain: Psi-conotoxin PIIIE (75 aa).

Residues 1 to 19 (MSKLGALLTICLLLFPITA) form the signal peptide. Residues 20–50 (LLMDGDQPADRPAERMDYDISSEVHRLLERR) constitute a propeptide that is removed on maturation. A 4-hydroxyproline mark is found at Pro-52, Pro-53, and Pro-64. Intrachain disulfides connect Cys-54-Cys-66, Cys-55-Cys-71, and Cys-60-Cys-72. The residue at position 74 (Gly-74) is a Glycine amide.

Expressed by the venom duct.

The protein resides in the secreted. Functionally, psi-conotoxins act on postsynaptic membranes, and act as non-competitive antagonist of nicotinic acetylcholine receptors (nAChR). Is more toxic than Psi-conotoxin PIIIF. In vivo, has paralytic activity when injected intraperitoneally into goldfish. This is Psi-conotoxin PIIIE from Conus purpurascens (Purple cone).